A 557-amino-acid polypeptide reads, in one-letter code: MDSDEGYNYEFDEDEECSEEDSGAEEEEDEDDDEPDDDTLDLGEVELVEPGLGVGGERDGLLCGETGGGGGSALGPGGGGGGGGGGGGGGPGHEQEEDYRYEVLTAEQILQHMVECIREVNEVIQNPATITRILLSHFNWDKEKLMERYFDGNLEKLFAECHVINPSKKSRTRQMNTRSSAQDMPCQICYLNYPNSYFTGLECGHKFCMQCWSEYLTTKIMEEGMGQTISCPAHGCDILVDDNTVMRLITDSKVKLKYQHLITNSFVECNRLLKWCPAPDCHHVVKVQYPDAKPVRCKCGRQFCFNCGENWHDPVKCKWLKKWIKKCDDDSETSNWIAANTKECPKCHVTIEKDGGCNHMVCRNQNCKAEFCWVCLGPWEPHGSAWYNCNRYNEDDAKAARDAQERSRAALQRYLFYCNRYMNHMQSLRFEHKLYAQVKQKMEEMQQHNMSWIEVQFLKKAVDVLCQCRATLMYTYVFAFYLKKNNQSIIFENNQADLENATEVLSGYLERDISQDSLQDIKQKVQDKYRYCESRRRVLLQHVHEGYEKDLWEYIED.

The span at methionine 1–leucine 47 shows a compositional bias: acidic residues. The segment at methionine 1 to glutamine 95 is disordered. The segment covering glutamate 65–glycine 92 has biased composition (gly residues). Residues threonine 105 to asparagine 153 are UBA-like. Position 142 is an N6-acetyllysine (lysine 142). Residues glutamine 182 to asparagine 393 form a TRIAD supradomain region. Zn(2+)-binding residues include cysteine 186, cysteine 189, cysteine 203, histidine 205, cysteine 208, cysteine 211, cysteine 231, cysteine 236, cysteine 276, cysteine 281, cysteine 297, cysteine 299, cysteine 304, cysteine 307, histidine 312, cysteine 317, cysteine 344, and cysteine 347. The RING-type 1 zinc finger occupies cysteine 186 to cysteine 236. The IBR-type zinc finger occupies leucine 256–cysteine 317. The RING-type 2; atypical zinc-finger motif lies at cysteine 344–cysteine 375. Cysteine 357 is a catalytic residue. 6 residues coordinate Zn(2+): cysteine 362, cysteine 367, cysteine 372, cysteine 375, histidine 382, and cysteine 389. The tract at residues arginine 408–aspartate 557 is ariadne domain.

Belongs to the RBR family. Ariadne subfamily. In terms of assembly, interacts (via the first RING-type zinc finger) with UBE2L3. Associates with cullin-RING ubiquitin ligase (CRL) complexes containing CUL1, CUL2 and CUL3. Interacts with neddylated CUL1. Interacts with neddylated CUL2. Interacts with neddylated CUL3. Interacts with neddylated CUL4A. In terms of tissue distribution, widely expressed.

It is found in the cytoplasm. The protein localises to the nucleus. The protein resides in the cajal body. The enzyme catalyses [E2 ubiquitin-conjugating enzyme]-S-ubiquitinyl-L-cysteine + [acceptor protein]-L-lysine = [E2 ubiquitin-conjugating enzyme]-L-cysteine + [acceptor protein]-N(6)-ubiquitinyl-L-lysine.. Its pathway is protein modification; protein ubiquitination. Its activity is regulated as follows. Autoinhibited by the ariadne domain, which masks the second RING-type zinc finger that contains the active site and inhibits the E3 activity. Inhibition is relieved upon binding to neddylated cullin-RING ubiquitin ligase complexes, which activate the E3 ligase activity of ARIH1. Functionally, E3 ubiquitin-protein ligase, which catalyzes ubiquitination of target proteins together with ubiquitin-conjugating enzyme E2 UBE2L3. Acts as an atypical E3 ubiquitin-protein ligase by working together with cullin-RING ubiquitin ligase (CRL) complexes and initiating ubiquitination of CRL substrates: associates with CRL complexes and specifically mediates addition of the first ubiquitin on CRLs targets. The initial ubiquitin is then elongated by CDC34/UBE2R1 and UBE2R2. E3 ubiquitin-protein ligase activity is activated upon binding to neddylated cullin-RING ubiquitin ligase complexes. Plays a role in protein translation in response to DNA damage by mediating ubiquitination of EIF4E2, the consequences of EIF4E2 ubiquitination are however unclear. According to a report, EIF4E2 ubiquitination leads to promote EIF4E2 cap-binding and protein translation arrest. According to another report EIF4E2 ubiquitination leads to its subsequent degradation. Acts as the ligase involved in ISGylation of EIF4E2. In vitro, controls the degradation of the LINC (LInker of Nucleoskeleton and Cytoskeleton) complex member SUN2 and may therefore have a role in the formation and localization of the LINC complex, and as a consequence, nuclear subcellular localization and nuclear morphology. This chain is E3 ubiquitin-protein ligase ARIH1, found in Homo sapiens (Human).